A 257-amino-acid chain; its full sequence is Imidazole glycerol phosphate synthase subunit HisF (257 aa).

Residues Asp-11 and Asp-130 contribute to the active site.

Belongs to the HisA/HisF family. In terms of assembly, heterodimer of HisH and HisF.

Its subcellular location is the cytoplasm. It carries out the reaction 5-[(5-phospho-1-deoxy-D-ribulos-1-ylimino)methylamino]-1-(5-phospho-beta-D-ribosyl)imidazole-4-carboxamide + L-glutamine = D-erythro-1-(imidazol-4-yl)glycerol 3-phosphate + 5-amino-1-(5-phospho-beta-D-ribosyl)imidazole-4-carboxamide + L-glutamate + H(+). The protein operates within amino-acid biosynthesis; L-histidine biosynthesis; L-histidine from 5-phospho-alpha-D-ribose 1-diphosphate: step 5/9. In terms of biological role, IGPS catalyzes the conversion of PRFAR and glutamine to IGP, AICAR and glutamate. The HisF subunit catalyzes the cyclization activity that produces IGP and AICAR from PRFAR using the ammonia provided by the HisH subunit. In Mannheimia succiniciproducens (strain KCTC 0769BP / MBEL55E), this protein is Imidazole glycerol phosphate synthase subunit HisF.